A 286-amino-acid chain; its full sequence is Bifunctional protein FolD (286 aa).

NADP(+)-binding positions include 166 to 168, serine 191, and isoleucine 232; that span reads GRS.

This sequence belongs to the tetrahydrofolate dehydrogenase/cyclohydrolase family. In terms of assembly, homodimer.

It catalyses the reaction (6R)-5,10-methylene-5,6,7,8-tetrahydrofolate + NADP(+) = (6R)-5,10-methenyltetrahydrofolate + NADPH. It carries out the reaction (6R)-5,10-methenyltetrahydrofolate + H2O = (6R)-10-formyltetrahydrofolate + H(+). Its pathway is one-carbon metabolism; tetrahydrofolate interconversion. Catalyzes the oxidation of 5,10-methylenetetrahydrofolate to 5,10-methenyltetrahydrofolate and then the hydrolysis of 5,10-methenyltetrahydrofolate to 10-formyltetrahydrofolate. This is Bifunctional protein FolD from Herpetosiphon aurantiacus (strain ATCC 23779 / DSM 785 / 114-95).